Here is a 374-residue protein sequence, read N- to C-terminus: 4-hydroxy-3-methylbut-2-en-1-yl diphosphate synthase (flavodoxin) (374 aa).

C270, C273, C305, and E312 together coordinate [4Fe-4S] cluster.

Belongs to the IspG family. The cofactor is [4Fe-4S] cluster.

The enzyme catalyses (2E)-4-hydroxy-3-methylbut-2-enyl diphosphate + oxidized [flavodoxin] + H2O + 2 H(+) = 2-C-methyl-D-erythritol 2,4-cyclic diphosphate + reduced [flavodoxin]. Its pathway is isoprenoid biosynthesis; isopentenyl diphosphate biosynthesis via DXP pathway; isopentenyl diphosphate from 1-deoxy-D-xylulose 5-phosphate: step 5/6. Converts 2C-methyl-D-erythritol 2,4-cyclodiphosphate (ME-2,4cPP) into 1-hydroxy-2-methyl-2-(E)-butenyl 4-diphosphate. The sequence is that of 4-hydroxy-3-methylbut-2-en-1-yl diphosphate synthase (flavodoxin) from Cellvibrio japonicus (strain Ueda107) (Pseudomonas fluorescens subsp. cellulosa).